The following is a 1057-amino-acid chain: Atrial natriuretic peptide receptor 1 (1057 aa).

A signal peptide spans 1-28; it reads MPGSRRVRPRLRALLLLPPLLLLRSGHA. Residues 29-469 lie on the Extracellular side of the membrane; it reads SDLTVAVVLP…CNQDHFSTLE (441 aa). Residue N41 is glycosylated (N-linked (GlcNAc...) asparagine). Positions 81, 113, and 114 each coordinate chloride. Intrachain disulfides connect C88–C114 and C192–C241. N208, N334, N375, N382, and N423 each carry an N-linked (GlcNAc...) asparagine glycan. C451 and C460 form a disulfide bridge. The helical transmembrane segment at 470–490 threads the bilayer; sequence VLALVGSLSLVSFLIVSFFIY. At 491-1057 the chain is on the cytoplasmic side; that stretch reads RKMQLEKELV…LGERGCSTRG (567 aa). Phosphoserine is present on residues S515 and S525. A Protein kinase domain is found at 524–801; sequence GSRLTLSGRG…QIRLALRKFN (278 aa). Residue T528 is modified to Phosphothreonine. S530, S534, and S538 each carry phosphoserine. The residue at position 541 (T541) is a Phosphothreonine. Residues 872–1002 form the Guanylate cyclase domain; sequence TIYFSDIVGF…DTVNTASRME (131 aa).

This sequence belongs to the adenylyl cyclase class-4/guanylyl cyclase family. As to quaternary structure, homodimer. Phosphorylation of the protein kinase-like domain is required for full activation by ANP.

The protein resides in the membrane. It carries out the reaction GTP = 3',5'-cyclic GMP + diphosphate. Its function is as follows. Receptor for the atrial natriuretic peptide NPPA/ANP and the brain natriuretic peptide NPPB/BNP which are potent vasoactive hormones playing a key role in cardiovascular homeostasis. Plays an essential role in the regulation of endothelial cell senescence and vascular aging. Upon activation by ANP or BNP, stimulates the production of cyclic guanosine monophosphate (cGMP) that promotes vascular tone and volume homeostasis by activation of protein kinase cGMP-dependent 1/PRKG1 and subsequently PRKAA1, thereby controlling blood pressure and maintaining cardiovascular homeostasis. This Mus musculus (Mouse) protein is Atrial natriuretic peptide receptor 1 (Npr1).